We begin with the raw amino-acid sequence, 198 residues long: Holliday junction branch migration complex subunit RuvA (198 aa).

The tract at residues 1–63 (MYDYIKGQLT…EDAHLLFGFH (63 aa)) is domain I. The interval 64 to 142 (TEDEKDVFLK…EAPQETGNTK (79 aa)) is domain II. The segment at 143 to 147 (ARSNK) is flexible linker. The tract at residues 148-198 (AGNTQLDEAIEALLALGYKAAELKKIRAFFEGTSETAEQYIKSALKLLMKG) is domain III.

The protein belongs to the RuvA family. As to quaternary structure, homotetramer. Forms an RuvA(8)-RuvB(12)-Holliday junction (HJ) complex. HJ DNA is sandwiched between 2 RuvA tetramers; dsDNA enters through RuvA and exits via RuvB. An RuvB hexamer assembles on each DNA strand where it exits the tetramer. Each RuvB hexamer is contacted by two RuvA subunits (via domain III) on 2 adjacent RuvB subunits; this complex drives branch migration. In the full resolvosome a probable DNA-RuvA(4)-RuvB(12)-RuvC(2) complex forms which resolves the HJ.

Its subcellular location is the cytoplasm. Its function is as follows. The RuvA-RuvB-RuvC complex processes Holliday junction (HJ) DNA during genetic recombination and DNA repair, while the RuvA-RuvB complex plays an important role in the rescue of blocked DNA replication forks via replication fork reversal (RFR). RuvA specifically binds to HJ cruciform DNA, conferring on it an open structure. The RuvB hexamer acts as an ATP-dependent pump, pulling dsDNA into and through the RuvAB complex. HJ branch migration allows RuvC to scan DNA until it finds its consensus sequence, where it cleaves and resolves the cruciform DNA. In Streptococcus pyogenes serotype M28 (strain MGAS6180), this protein is Holliday junction branch migration complex subunit RuvA.